A 168-amino-acid chain; its full sequence is tRNA-splicing endonuclease (168 aa).

Active-site residues include Tyr107, His114, and Lys145.

The protein belongs to the tRNA-intron endonuclease family. Archaeal short subfamily. Homotetramer; although the tetramer contains four active sites, only two participate in the cleavage. Therefore, it should be considered as a dimer of dimers.

It catalyses the reaction pretRNA = a 3'-half-tRNA molecule with a 5'-OH end + a 5'-half-tRNA molecule with a 2',3'-cyclic phosphate end + an intron with a 2',3'-cyclic phosphate and a 5'-hydroxyl terminus.. Endonuclease that removes tRNA introns. Cleaves pre-tRNA at the 5'- and 3'-splice sites to release the intron. The products are an intron and two tRNA half-molecules bearing 2',3' cyclic phosphate and 5'-OH termini. Recognizes a pseudosymmetric substrate in which 2 bulged loops of 3 bases are separated by a stem of 4 bp. This Thermococcus kodakarensis (strain ATCC BAA-918 / JCM 12380 / KOD1) (Pyrococcus kodakaraensis (strain KOD1)) protein is tRNA-splicing endonuclease.